A 95-amino-acid polypeptide reads, in one-letter code: Ferredoxin-like protein FixX (95 aa).

This sequence belongs to the bacterial-type ferredoxin family. FixX subfamily.

In terms of biological role, could be part of an electron transfer system required for anaerobic carnitine reduction. Could be a 3Fe-4S cluster-containing protein. The protein is Ferredoxin-like protein FixX (fixX) of Shigella flexneri.